Here is a 243-residue protein sequence, read N- to C-terminus: Coproheme decarboxylase (243 aa).

Residue tyrosine 145 is part of the active site. Histidine 168 contacts Fe-coproporphyrin III.

Belongs to the ChdC family. Type 2 subfamily. Fe-coproporphyrin III serves as cofactor.

It carries out the reaction Fe-coproporphyrin III + 2 H2O2 + 2 H(+) = heme b + 2 CO2 + 4 H2O. The catalysed reaction is Fe-coproporphyrin III + H2O2 + H(+) = harderoheme III + CO2 + 2 H2O. It catalyses the reaction harderoheme III + H2O2 + H(+) = heme b + CO2 + 2 H2O. It participates in porphyrin-containing compound metabolism; protoheme biosynthesis. Involved in coproporphyrin-dependent heme b biosynthesis. Catalyzes the decarboxylation of Fe-coproporphyrin III (coproheme) to heme b (protoheme IX), the last step of the pathway. The reaction occurs in a stepwise manner with a three-propionate intermediate. The sequence is that of Coproheme decarboxylase from Streptomyces coelicolor (strain ATCC BAA-471 / A3(2) / M145).